Consider the following 307-residue polypeptide: MHRSGTTMAWNVFKFCTALRGLGSIMILLVLGVVGVTYYAVVLTNYGPALSQGGLDSLAALTILILFHFLLAMLLWSYFSVVFTDPGVVPPNWRPSTDEERGESDPLNSLDFVGLQSDSSSSNPRVRFCRKCNQLKPSRCHHCSVCGRCVLKMDHHCVWVVNCVGALNYKYFLLFLFYTFLETTLVTLVLMPHFIAFFSDEEIPGTPGTLATTFLAFVLNLAFALSVMGFLIMHISLVAGNTTTIEAYEKKTTTKWRYDLGKKKNFEQVFGMDKRYWLIPGYTEEDLRRMPELQGLEYPSKPDFDSQ.

Transmembrane regions (helical) follow at residues 22–42 (LGSI…YAVV) and 63–83 (ILIL…SVVF). Residues 127-177 (RFCRKCNQLKPSRCHHCSVCGRCVLKMDHHCVWVVNCVGALNYKYFLLFLF) form the DHHC domain. Cysteine 157 serves as the catalytic S-palmitoyl cysteine intermediate. 2 consecutive transmembrane segments (helical) span residues 171–191 (YFLL…LVLM) and 213–233 (TFLA…FLIM).

This sequence belongs to the DHHC palmitoyltransferase family.

Its subcellular location is the golgi apparatus. It localises to the trans-Golgi network membrane. The enzyme catalyses L-cysteinyl-[protein] + hexadecanoyl-CoA = S-hexadecanoyl-L-cysteinyl-[protein] + CoA. In terms of biological role, palmitoyl acyltransferase. The chain is Probable protein S-acyltransferase 14 (PAT14) from Arabidopsis thaliana (Mouse-ear cress).